The primary structure comprises 259 residues: Undecaprenyl-diphosphatase (259 aa).

7 helical membrane passes run 1–21 (MEIFKVIFLGIIQGLTEFLPI), 40–60 (QITLDVFLHFGTVIPVLIIFW), 75–95 (WLTILILVGIIPTGIIGILFE), 101–121 (LFSSVKTVGFMLLVTGFLLYL), 179–199 (SFLLSAPVIFGAGLVELKDAL), 206–226 (LTWLSIIIGTIFAALSGYFAI), and 239–259 (TVFAYYCWIVGIMIIILAGIF).

The protein belongs to the UppP family.

It localises to the cell inner membrane. The catalysed reaction is di-trans,octa-cis-undecaprenyl diphosphate + H2O = di-trans,octa-cis-undecaprenyl phosphate + phosphate + H(+). Catalyzes the dephosphorylation of undecaprenyl diphosphate (UPP). Confers resistance to bacitracin. The protein is Undecaprenyl-diphosphatase of Halothermothrix orenii (strain H 168 / OCM 544 / DSM 9562).